A 474-amino-acid chain; its full sequence is tRNA-2-methylthio-N(6)-dimethylallyladenosine synthase (474 aa).

An MTTase N-terminal domain is found at 3–120 (KKLYIKTFGC…LPQMISTRQI (118 aa)). Cys12, Cys49, Cys83, Cys157, Cys161, and Cys164 together coordinate [4Fe-4S] cluster. The Radical SAM core domain maps to 143-382 (RTEGVTAFVS…ELQAQAISVR (240 aa)). The TRAM domain maps to 381-444 (VRMVGTTQRV…SHTLRGENVR (64 aa)).

It belongs to the methylthiotransferase family. MiaB subfamily. Monomer. Requires [4Fe-4S] cluster as cofactor.

The protein resides in the cytoplasm. The enzyme catalyses N(6)-dimethylallyladenosine(37) in tRNA + (sulfur carrier)-SH + AH2 + 2 S-adenosyl-L-methionine = 2-methylsulfanyl-N(6)-dimethylallyladenosine(37) in tRNA + (sulfur carrier)-H + 5'-deoxyadenosine + L-methionine + A + S-adenosyl-L-homocysteine + 2 H(+). In terms of biological role, catalyzes the methylthiolation of N6-(dimethylallyl)adenosine (i(6)A), leading to the formation of 2-methylthio-N6-(dimethylallyl)adenosine (ms(2)i(6)A) at position 37 in tRNAs that read codons beginning with uridine. The polypeptide is tRNA-2-methylthio-N(6)-dimethylallyladenosine synthase (Nitrosospira multiformis (strain ATCC 25196 / NCIMB 11849 / C 71)).